The chain runs to 385 residues: Tetraacyldisaccharide 4'-kinase (385 aa).

ATP is bound at residue 60–67; sequence TVGGSGKT.

It belongs to the LpxK family.

It catalyses the reaction a lipid A disaccharide + ATP = a lipid IVA + ADP + H(+). Its pathway is glycolipid biosynthesis; lipid IV(A) biosynthesis; lipid IV(A) from (3R)-3-hydroxytetradecanoyl-[acyl-carrier-protein] and UDP-N-acetyl-alpha-D-glucosamine: step 6/6. Its function is as follows. Transfers the gamma-phosphate of ATP to the 4'-position of a tetraacyldisaccharide 1-phosphate intermediate (termed DS-1-P) to form tetraacyldisaccharide 1,4'-bis-phosphate (lipid IVA). The polypeptide is Tetraacyldisaccharide 4'-kinase (Psychrobacter arcticus (strain DSM 17307 / VKM B-2377 / 273-4)).